The primary structure comprises 873 residues: Nonsense-mediated mRNA decay factor SMG8 (873 aa).

Residues 531–604 form a disordered region; sequence AKKMAQREDE…ESMASKTERE (74 aa). Residues 540–550 are compositionally biased toward acidic residues; that stretch reads ELAEEDTDLDI. 2 stretches are compositionally biased toward low complexity: residues 551–562 and 574–583; these read PESLLDPDSTSP and SSSESSSQES. The segment covering 591–604 has biased composition (basic and acidic residues); the sequence is SRRDESMASKTERE.

This sequence belongs to the SMG8 family.

Its function is as follows. Involved in nonsense-mediated decay (NMD) of mRNAs containing premature stop codons. Probable component of kinase complex containing smg-1 and recruited to stalled ribosomes. This is Nonsense-mediated mRNA decay factor SMG8 (smg-8) from Caenorhabditis elegans.